A 322-amino-acid polypeptide reads, in one-letter code: Cyclin mcs2 (322 aa).

Residue S310 is modified to Phosphoserine.

This sequence belongs to the cyclin family. Cyclin C subfamily. One of the nine subunits forming the core-TFIIH basal transcription factor. Interacts with crk1 and skp1.

It localises to the nucleus. Essential for progression through the cell cycle. Possesses kinase activity that can be detected when myelin basic protein (MBP) is provided as an exogenous substrate. The chain is Cyclin mcs2 (mcs2) from Schizosaccharomyces pombe (strain 972 / ATCC 24843) (Fission yeast).